The sequence spans 342 residues: (Lyso)-N-acylphosphatidylethanolamine lipase (342 aa).

In terms of domain architecture, AB hydrolase-1 spans 70-323 (PLVMVHGFGG…EIEGASHHVY (254 aa)).

This sequence belongs to the peptidase S33 family. ABHD4/ABHD5 subfamily. Highest levels in the CNS and in testis, intermediate levels in liver and kidney. Hardly detectable in heart.

The enzyme catalyses N-hexadecanoyl-1,2-di-(9Z-octadecenoyl)-sn-glycero-3-phosphoethanolamine + H2O = N-hexadecanoyl-1-(9Z-octadecenoyl)-sn-glycero-3-phosphoethanolamine + (9Z)-octadecenoate + H(+). It catalyses the reaction an N-acyl-1,2-diacyl-sn-glycero-3-phosphoethanolamine + H2O = N,1-diacyl-sn-glycero-3-phosphoethanolamine + a fatty acid + H(+). It carries out the reaction N-hexadecanoyl-1-(9Z-octadecenoyl)-sn-glycero-3-phosphoethanolamine + H2O = N-hexadecanoyl-sn-glycero-3-phosphoethanolamine + (9Z)-octadecenoate + H(+). The catalysed reaction is N-octadecanoyl-1-(9Z-octadecenoyl)-sn-glycero-3-phosphoethanolamine + H2O = N-octadecanoyl-sn-glycero-3-phospho-ethanolamine + (9Z)-octadecenoate + H(+). The enzyme catalyses N-eicosanoyl-1-(9Z-octadecenoyl)-sn-glycero-3-phosphoethanolamine + H2O = N-eicosanoyl-sn-glycero-3-phosphoethanolamine + (9Z)-octadecenoate + H(+). It catalyses the reaction N,1-di-(9Z-octadecenoyl)-sn-glycero-3-phosphoethanolamine + H2O = N-(9Z-octadecenoyl)-sn-glycero-3-phosphoethanolamine + (9Z)-octadecenoate + H(+). It carries out the reaction N-(5Z,8Z,11Z,14Z-eicosatetraenoyl)-1-(9Z-octadecenoyl)-sn-glycero-3-phosphoethanolamine + H2O = N-(5Z,8Z,11Z,14Z-eicosatetraenoyl)-sn-glycero-3-phosphoethanolamine + (9Z)-octadecenoate + H(+). The catalysed reaction is 1-octadecanoyl-2-(9Z-octadecenoyl)-sn-glycero-3-phospho-(N-hexadecanoyl)-serine + H2O = 1-octadecanoyl-2-hydroxy-sn-glycero-3-phospho-(N-hexadecanoyl)-serine + (9Z)-octadecenoate + H(+). The enzyme catalyses 1-O-(1Z-octadecenoyl)-2-(9Z-octadecenoyl)-sn-glycero-3-phospho-N-hexadecanoyl-ethanolamine + H2O = 1-O-(1Z-octadecenyl)-sn-glycero-3-phospho-N-hexadecanoyl-ethanolamine + (9Z)-octadecenoate + H(+). It catalyses the reaction N,1-diacyl-sn-glycero-3-phosphoethanolamine + H2O = N-acyl-sn-glycero-3-phosphoethanolamine + a fatty acid + H(+). Functionally, lysophospholipase selective for N-acyl phosphatidylethanolamine (NAPE). Contributes to the biosynthesis of N-acyl ethanolamines, including the endocannabinoid anandamide by hydrolyzing the sn-1 and sn-2 acyl chains from N-acyl phosphatidylethanolamine (NAPE) generating glycerophospho-N-acyl ethanolamine (GP-NAE), an intermediate for N-acyl ethanolamine biosynthesis. Hydrolyzes substrates bearing saturated, monounsaturated, polyunsaturated N-acyl chains. Shows no significant activity towards other lysophospholipids, including lysophosphatidylcholine, lysophosphatidylethanolamine and lysophosphatidylserine. The protein is (Lyso)-N-acylphosphatidylethanolamine lipase of Mus musculus (Mouse).